We begin with the raw amino-acid sequence, 213 residues long: Orotate phosphoribosyltransferase (213 aa).

Lysine 26 contacts 5-phospho-alpha-D-ribose 1-diphosphate. 34-35 lines the orotate pocket; the sequence is FF. Residues 72–73, arginine 99, lysine 100, lysine 103, histidine 105, and 124–132 contribute to the 5-phospho-alpha-D-ribose 1-diphosphate site; these read YK and DDVITAGTA. 2 residues coordinate orotate: threonine 128 and arginine 156.

It belongs to the purine/pyrimidine phosphoribosyltransferase family. PyrE subfamily. As to quaternary structure, homodimer. Mg(2+) serves as cofactor.

The enzyme catalyses orotidine 5'-phosphate + diphosphate = orotate + 5-phospho-alpha-D-ribose 1-diphosphate. The protein operates within pyrimidine metabolism; UMP biosynthesis via de novo pathway; UMP from orotate: step 1/2. Functionally, catalyzes the transfer of a ribosyl phosphate group from 5-phosphoribose 1-diphosphate to orotate, leading to the formation of orotidine monophosphate (OMP). This Salmonella choleraesuis (strain SC-B67) protein is Orotate phosphoribosyltransferase.